A 107-amino-acid chain; its full sequence is Nucleoid-associated protein BMEA_A0033 (107 aa).

It belongs to the YbaB/EbfC family. As to quaternary structure, homodimer.

The protein localises to the cytoplasm. It localises to the nucleoid. In terms of biological role, binds to DNA and alters its conformation. May be involved in regulation of gene expression, nucleoid organization and DNA protection. This chain is Nucleoid-associated protein BMEA_A0033, found in Brucella melitensis biotype 2 (strain ATCC 23457).